A 384-amino-acid chain; its full sequence is MGWSPRWKVMLRGIFNAMISIHILLSLLFAHIATAQSGRSFGDSHGHSLNKRAPLAPDGDGICYTYTIQEGDTCAKLAQRYQVTTSNIETWNVGSWGWPGCAKIKQGDFVCLSSGALPMPVALPNAVCGPQVPGTRRPIKYSDLASLNPCPSTQCCAISGQCGTLSNFCDVSPLGSCIFNCGPKSTTKSAASKTTTTSNPTTTSKTTITSKPTTTSKPTTISKTTKAVMVTLTSIQMVPPPDKTTASVAPTATWQITIYEKGGCKGDYYSAQGHEDQIVGGCIVLADNTDTKISDTTTSCRWWSDGGLNWGTCASSKLVNARSFFIKSGKCVIYSGKKCQNEDWVGETYGAFKGCQDGNTGYLSPRKDAKWGSLQCFEYKSYTT.

An N-terminal signal peptide occupies residues 1–35 (MGWSPRWKVMLRGIFNAMISIHILLSLLFAHIATA). The LysM domain occupies 64-112 (YTYTIQEGDTCAKLAQRYQVTTSNIETWNVGSWGWPGCAKIKQGDFVCL). The disordered stretch occupies residues 185–220 (STTKSAASKTTTTSNPTTTSKTTITSKPTTTSKPTT).

The protein belongs to the secreted LysM effector family.

The protein localises to the secreted. Its function is as follows. Secreted LysM effector that might have a role in sequestration of chitin oligosaccharides (breakdown products of fungal cell walls that are released during invasion and act as triggers of host immunity) to dampen host defense. This chain is Secreted LysM effector LysM14, found in Penicillium expansum (Blue mold rot fungus).